Here is a 443-residue protein sequence, read N- to C-terminus: Acid phosphatase type 7 (443 aa).

Positions 1 to 23 (MAAAPPPPPPLLLLLLCVCAVFA) are cleaved as a signal peptide. Residues Asn-53, Asn-76, and Asn-126 are each glycosylated (N-linked (GlcNAc...) asparagine). Fe cation is bound by residues Asp-140, Asp-169, and Tyr-172. Zn(2+) is bound at residue Asp-169. Residue Asn-204 coordinates Zn(2+). Asn-210 is a glycosylation site (N-linked (GlcNAc...) asparagine). His-288 contacts Zn(2+). Asn-313 is a glycosylation site (N-linked (GlcNAc...) asparagine). A Zn(2+)-binding site is contributed by His-338. Residue His-340 participates in Fe cation binding. N-linked (GlcNAc...) asparagine glycans are attached at residues Asn-355 and Asn-409.

Belongs to the metallophosphoesterase superfamily. Purple acid phosphatase family. It depends on Fe cation as a cofactor. The cofactor is Zn(2+).

The protein localises to the secreted. It catalyses the reaction a phosphate monoester + H2O = an alcohol + phosphate. The polypeptide is Acid phosphatase type 7 (Danio rerio (Zebrafish)).